Consider the following 102-residue polypeptide: Large ribosomal subunit protein bL21 (102 aa).

It belongs to the bacterial ribosomal protein bL21 family. As to quaternary structure, part of the 50S ribosomal subunit. Contacts protein L20.

Its function is as follows. This protein binds to 23S rRNA in the presence of protein L20. The polypeptide is Large ribosomal subunit protein bL21 (Saccharopolyspora erythraea (strain ATCC 11635 / DSM 40517 / JCM 4748 / NBRC 13426 / NCIMB 8594 / NRRL 2338)).